A 189-amino-acid chain; its full sequence is Early E3 20.5 kDa glycoprotein (189 aa).

N73 and N137 each carry an N-linked (GlcNAc...) asparagine; by host glycan.

This sequence belongs to the adenoviridae E3_20 family.

Functionally, E3 proteins seem to be dispensable for virus growth in tissue culture cells. They are potentially important for virus growth under special conditions; E3 region may help adenoviruses to evade the immune surveillance of the host. This Human adenovirus B serotype 3 (HAdV-3) protein is Early E3 20.5 kDa glycoprotein.